We begin with the raw amino-acid sequence, 208 residues long: Small ribosomal subunit protein uS4 (208 aa).

Residues 98–158 form the S4 RNA-binding domain; sequence RRLDNVVYRL…EKSRKIACIN (61 aa).

The protein belongs to the universal ribosomal protein uS4 family. Part of the 30S ribosomal subunit. Contacts protein S5. The interaction surface between S4 and S5 is involved in control of translational fidelity.

In terms of biological role, one of the primary rRNA binding proteins, it binds directly to 16S rRNA where it nucleates assembly of the body of the 30S subunit. Its function is as follows. With S5 and S12 plays an important role in translational accuracy. The sequence is that of Small ribosomal subunit protein uS4 from Geobacter metallireducens (strain ATCC 53774 / DSM 7210 / GS-15).